A 425-amino-acid polypeptide reads, in one-letter code: Homogentisate 1,2-dioxygenase (425 aa).

The active-site Proton acceptor is the histidine 283. Fe cation is bound by residues histidine 326 and glutamate 332. Homogentisate contacts are provided by tyrosine 341 and histidine 362. Histidine 362 provides a ligand contact to Fe cation.

Belongs to the homogentisate dioxygenase family. In terms of assembly, hexamer; dimer of trimers. It depends on Fe cation as a cofactor.

The catalysed reaction is homogentisate + O2 = 4-maleylacetoacetate + H(+). Its pathway is amino-acid degradation; L-phenylalanine degradation; acetoacetate and fumarate from L-phenylalanine: step 4/6. Its function is as follows. Involved in the catabolism of homogentisate (2,5-dihydroxyphenylacetate or 2,5-OH-PhAc), a central intermediate in the degradation of phenylalanine and tyrosine. Catalyzes the oxidative ring cleavage of the aromatic ring of homogentisate to yield maleylacetoacetate. The sequence is that of Homogentisate 1,2-dioxygenase from Caulobacter vibrioides (strain ATCC 19089 / CIP 103742 / CB 15) (Caulobacter crescentus).